The primary structure comprises 342 residues: Nucleoid-associated protein Sputcn32_2288 (342 aa).

This sequence belongs to the YejK family.

It is found in the cytoplasm. The protein localises to the nucleoid. In Shewanella putrefaciens (strain CN-32 / ATCC BAA-453), this protein is Nucleoid-associated protein Sputcn32_2288.